A 76-amino-acid chain; its full sequence is ATP synthase peripheral stalk subunit F6, mitochondrial (76 aa).

An N6-acetyllysine mark is found at lysine 9, lysine 14, and lysine 47. N6-acetyllysine; alternate is present on residues lysine 52 and lysine 67. N6-succinyllysine; alternate occurs at positions 52 and 67. Residue lysine 73 is modified to N6-acetyllysine. Position 76 is a phosphoserine (serine 76).

It belongs to the eukaryotic ATPase subunit F6 family. Component of the ATP synthase complex composed at least of ATP5F1A/subunit alpha, ATP5F1B/subunit beta, ATP5MC1/subunit c (homooctomer), MT-ATP6/subunit a, MT-ATP8/subunit 8, ATP5ME/subunit e, ATP5MF/subunit f, ATP5MG/subunit g, ATP5MK/subunit k, ATP5MJ/subunit j, ATP5F1C/subunit gamma, ATP5F1D/subunit delta, ATP5F1E/subunit epsilon, ATP5PF/subunit F6, ATP5PB/subunit b, ATP5PD/subunit d, ATP5PO/subunit OSCP. ATP synthase complex consists of a soluble F(1) head domain (subunits alpha(3) and beta(3)) - the catalytic core - and a membrane F(0) domain - the membrane proton channel (subunits c, a, 8, e, f, g, k and j). These two domains are linked by a central stalk (subunits gamma, delta, and epsilon) rotating inside the F1 region and a stationary peripheral stalk (subunits F6, b, d, and OSCP).

The protein localises to the mitochondrion. It localises to the mitochondrion inner membrane. In terms of biological role, subunit F6, of the mitochondrial membrane ATP synthase complex (F(1)F(0) ATP synthase or Complex V) that produces ATP from ADP in the presence of a proton gradient across the membrane which is generated by electron transport complexes of the respiratory chain. ATP synthase complex consist of a soluble F(1) head domain - the catalytic core - and a membrane F(1) domain - the membrane proton channel. These two domains are linked by a central stalk rotating inside the F(1) region and a stationary peripheral stalk. During catalysis, ATP synthesis in the catalytic domain of F(1) is coupled via a rotary mechanism of the central stalk subunits to proton translocation. In vivo, can only synthesize ATP although its ATP hydrolase activity can be activated artificially in vitro. Part of the complex F(0) domain. Part of the complex F(0) domain and the peripheric stalk, which acts as a stator to hold the catalytic alpha(3)beta(3) subcomplex and subunit a/ATP6 static relative to the rotary elements. The protein is ATP synthase peripheral stalk subunit F6, mitochondrial of Sus scrofa (Pig).